The primary structure comprises 207 residues: Calcipressin-like protein (207 aa).

The tract at residues proline 176 to histidine 181 is required for tax-6 interaction.

Belongs to the RCAN family. Interacts with tax-6 (via catalytic domain); the interaction is calcium-dependent. As to expression, expressed in lateral hypodermal cells, marginal cells of the pharynx, vulva epithelial cells, ventral and dorsal nerve cords and commissures and various neurons in the anterior and posterior regions. Expressed in male tail structures including the diagonal muscles, sensory rays and spicules. Expressed in PHC neurons and most tail neurons and support cells of the phasmid neurons. Also expressed in pharyngeal muscle, head neurons, excretory canal cells and hypodermal seam cells.

Functionally, inhibits tax-6/calcineurin A phosphatase activity and thereby negatively regulates calcineurin-mediated functions. Plays a role in modulating temperature-dependent calcium responses in AFD neurons and in addition, also negatively regulates thermotaxis in a tax-6-dependent manner in AFD neurons. In response to changes in intracellular calcium levels may also regulate nuclear translocation of transcriptional regulators such as crtc-1. May play a role in regulating body size. Plays a role in male tail tip morphogenesis. This Caenorhabditis elegans protein is Calcipressin-like protein.